Here is a 262-residue protein sequence, read N- to C-terminus: L-aspartate dehydrogenase (262 aa).

NAD(+) is bound by residues alanine 128 and asparagine 183. Histidine 213 is a catalytic residue.

The protein belongs to the L-aspartate dehydrogenase family.

The catalysed reaction is L-aspartate + NADP(+) + H2O = oxaloacetate + NH4(+) + NADPH + H(+). It catalyses the reaction L-aspartate + NAD(+) + H2O = oxaloacetate + NH4(+) + NADH + H(+). The protein operates within cofactor biosynthesis; NAD(+) biosynthesis; iminoaspartate from L-aspartate (dehydrogenase route): step 1/1. Specifically catalyzes the NAD or NADP-dependent dehydrogenation of L-aspartate to iminoaspartate. This Methanopyrus kandleri (strain AV19 / DSM 6324 / JCM 9639 / NBRC 100938) protein is L-aspartate dehydrogenase.